The chain runs to 2184 residues: Chromodomain-helicase-DNA-binding protein 8 (2184 aa).

Disordered stretches follow at residues 379 to 399 (VKTSTGGGESRKLDSQKKQEK) and 419 to 527 (IPRV…KRKK). Residues 387–399 (ESRKLDSQKKQEK) are compositionally biased toward basic and acidic residues. The segment covering 425–437 (EDELPSVNPEDDD) has biased composition (acidic residues). Residues 448-459 (GETSDRSKDEKP) show a composition bias toward basic and acidic residues. The segment covering 516-527 (KRRSNRQVKRKK) has biased composition (basic residues). Chromo domains lie at 586-653 (AIVD…TQMQ) and 668-734 (VEVD…RVAR). The Helicase ATP-binding domain maps to 767-941 (LFNWYNRQNC…FSLLHFLEPT (175 aa)). 780–787 (DEMGLGKT) provides a ligand contact to ATP. The DEAH box motif lies at 892–895 (DEAH). In terms of domain architecture, Helicase C-terminal spans 1081–1252 (LIDKLLPKLR…FTKKEIEDLL (172 aa)). Disordered stretches follow at residues 1907–1989 (GISG…EESR) and 2039–2076 (WSSPRRLSDPPSDSPDSLPPTPEQQSPAHFTQIRPAPD). Composition is skewed to low complexity over residues 1912-1961 (SRPS…SNSE) and 2040-2054 (SSPRRLSDPPSDSPD).

This sequence belongs to the SNF2/RAD54 helicase family. CHD8 subfamily. In terms of assembly, component of some MLL1/MLL complex.

It localises to the nucleus. It carries out the reaction ATP + H2O = ADP + phosphate + H(+). ATP-dependent chromatin-remodeling factor, it slides nucleosomes along DNA; nucleosome sliding requires ATP. Acts as a transcription repressor by remodeling chromatin structure and recruiting histone H1 to target genes. Suppresses p53/tp53-mediated apoptosis by recruiting histone H1 and preventing p53/tp53 transactivation activity. Acts as a negative regulator of Wnt signaling pathway by regulating beta-catenin (ctnnb1) activity. Negatively regulates ctnnb1-targeted gene expression by being recruited specifically to the promoter regions of several ctnnb1 responsive genes. May also act as a transcription activator by participating in efficient U6 RNA polymerase III transcription. In Xenopus tropicalis (Western clawed frog), this protein is Chromodomain-helicase-DNA-binding protein 8.